An 853-amino-acid polypeptide reads, in one-letter code: Probable inorganic carbon transporter subunit DabA (853 aa).

The interval 1–21 (MSHANSEETMMNTAVAHPSTS) is disordered. The span at 7-21 (EETMMNTAVAHPSTS) shows a compositional bias: polar residues. Residues Cys364, Asp366, His546, and Cys561 each contribute to the Zn(2+) site.

Belongs to the inorganic carbon transporter (TC 9.A.2) DabA family. Forms a complex with DabB. The cofactor is Zn(2+).

It is found in the cell inner membrane. Its function is as follows. Part of an energy-coupled inorganic carbon pump. The chain is Probable inorganic carbon transporter subunit DabA from Methylovorus glucosotrophus (strain SIP3-4).